The chain runs to 330 residues: Malate dehydrogenase (330 aa).

11 to 17 is an NAD(+) binding site; it reads GGAGQIA. Residues arginine 92 and arginine 98 each coordinate substrate. Residues asparagine 105, glutamine 112, and 129–131 each bind NAD(+); that span reads VGN. Positions 131 and 162 each coordinate substrate. The Proton acceptor role is filled by histidine 187.

Belongs to the LDH/MDH superfamily. MDH type 2 family.

The catalysed reaction is (S)-malate + NAD(+) = oxaloacetate + NADH + H(+). Its function is as follows. Catalyzes the reversible oxidation of malate to oxaloacetate. The chain is Malate dehydrogenase from Protochlamydia amoebophila (strain UWE25).